The chain runs to 715 residues: Macrolide export ATP-binding/permease protein MacB (715 aa).

In terms of domain architecture, ABC transporter spans Ile-4 to Lys-245. Residue Gly-40 to Thr-47 participates in ATP binding. The interval Ala-229–Met-251 is disordered. 4 helical membrane passes run Ala-277–Ile-297, Leu-592–Met-612, Gln-639–Gly-659, and Ile-681–Trp-701.

It belongs to the ABC transporter superfamily. Macrolide exporter (TC 3.A.1.122) family. Homodimer.

The protein localises to the cell inner membrane. In terms of biological role, non-canonical ABC transporter that contains transmembrane domains (TMD), which form a pore in the inner membrane, and an ATP-binding domain (NBD), which is responsible for energy generation. Confers resistance against macrolides. The protein is Macrolide export ATP-binding/permease protein MacB of Syntrophobacter fumaroxidans (strain DSM 10017 / MPOB).